The primary structure comprises 1213 residues: Protein jagged-1b (1213 aa).

Residues 1-26 (MILRRSSVFSAFYLHAFLLCLRTTVS) form the signal peptide. Residues 27–1064 (DASGHFELEI…HQIPSPKTDY (1038 aa)) are Extracellular-facing. Asparagine 139 carries an N-linked (GlcNAc...) asparagine glycan. Residues 182 to 226 (VTCLEHYYGFGCNKFCRPRDEFFGHYTCDQNGNKTCLEGWTGPDC) form the DSL domain. 2 disulfides stabilise this stretch: cysteine 184–cysteine 193 and cysteine 197–cysteine 209. Asparagine 214 carries an N-linked (GlcNAc...) asparagine glycan. 39 disulfides stabilise this stretch: cysteine 217–cysteine 226, cysteine 231–cysteine 242, cysteine 235–cysteine 248, cysteine 250–cysteine 259, cysteine 262–cysteine 273, cysteine 268–cysteine 279, cysteine 281–cysteine 290, cysteine 297–cysteine 309, cysteine 303–cysteine 319, cysteine 321–cysteine 330, cysteine 337–cysteine 348, cysteine 342–cysteine 357, cysteine 359–cysteine 368, cysteine 375–cysteine 386, cysteine 380–cysteine 395, cysteine 397–cysteine 406, cysteine 413–cysteine 424, cysteine 418–cysteine 433, cysteine 435–cysteine 444, cysteine 451–cysteine 461, cysteine 455–cysteine 470, cysteine 472–cysteine 481, cysteine 488–cysteine 499, cysteine 493–cysteine 508, cysteine 510–cysteine 519, cysteine 526–cysteine 537, cysteine 531–cysteine 546, cysteine 548–cysteine 557, cysteine 596–cysteine 612, cysteine 614–cysteine 623, cysteine 630–cysteine 641, cysteine 635–cysteine 650, cysteine 652–cysteine 661, cysteine 668–cysteine 679, cysteine 673–cysteine 688, cysteine 690–cysteine 699, cysteine 706–cysteine 717, cysteine 711–cysteine 726, and cysteine 728–cysteine 737. The 34-residue stretch at 227 to 260 (NTAICRQGCSTEHGSCKQPGGCKCLYGWQGPYCD) folds into the EGF-like 1 domain. Positions 261 to 291 (KCIPHPGCVHGTCVEPWQCLCDTNWGGQLCD) constitute an EGF-like 2; atypical domain. EGF-like domains are found at residues 293–331 (DLNYCGTHQPCLNGGTCSNTGPDKYQCSCEDGYSGVNCE) and 333–369 (AEHACLSNPCANGGTCKETSQGYECHCAIGWSGTSCE). An EGF-like 5; calcium-binding domain is found at 371 to 407 (NVDDCTPNQCKHGGTCQDLVNGFKCACPPHWTGKTCQ). An EGF-like 6; calcium-binding domain is found at 409 to 445 (DANECEDKPCVNAKSCHNLIGAYFCECLPGWSGQNCD). Residues 447 to 482 (NINDCKGQCLNGGTCKDLVNGYRCLCPPGYTGEQCE) form the EGF-like 7; calcium-binding domain. The EGF-like 8; calcium-binding domain maps to 484-520 (DVDECASSPCLNGGRCQDEVNGFQCLCPAGFSGQLCQ). EGF-like domains follow at residues 522 to 558 (DIDYCKPNPCQNGAQCFNLASDYFCKCPDDYEGKNCS) and 592 to 624 (SSNVCGPHGRCRSQAGGQFTCECQEGFRGTYCH). A glycan (N-linked (GlcNAc...) asparagine) is linked at asparagine 556. An EGF-like 11; calcium-binding domain is found at 626–662 (NINDCESNPCRNGGTCIDKVNVYQCICADGWEGVHCE). Residues 664–700 (NIDDCSLNPCLNKGACQDLVNDFYCECRNGWKGKTCH) form the EGF-like 12; calcium-binding domain. Positions 702 to 738 (RDSQCDEATCNNGGTCHDEGDTFKCRCSPGWEGATCN) constitute an EGF-like 13 domain. The N-linked (GlcNAc...) asparagine glycan is linked to asparagine 742. 9 cysteine pairs are disulfide-bonded: cysteine 745–cysteine 756, cysteine 750–cysteine 765, cysteine 767–cysteine 776, cysteine 783–cysteine 794, cysteine 788–cysteine 803, cysteine 805–cysteine 814, cysteine 821–cysteine 832, cysteine 826–cysteine 841, and cysteine 843–cysteine 852. One can recognise an EGF-like 14 domain in the interval 746 to 777 (LPNPCENGGTCVVNGDSFNCVCKEGWEGSTCT). The EGF-like 15; calcium-binding domain maps to 779–815 (NTNDCNPHPCYNSGTCVDGENWYRCECAPGFAGPDCR). In terms of domain architecture, EGF-like 16; calcium-binding spans 817 to 853 (NINECQSSPCAFGSTCVDEINGYRCLCPPGRIGPDCQ). The region spanning 860-914 (CIANGQVTADGAKWEEDCNICQCQNGRIHCTMMWCGPKSCRIGKARGGCPASQSC) is the VWFC domain. In terms of domain architecture, EGF-like 17 spans 918 to 956 (KEEQCFVKPCPSLGECWPSAPPPPSKCHASFSYQDDSCA). Residues asparagine 957, asparagine 988, and asparagine 1042 are each glycosylated (N-linked (GlcNAc...) asparagine). The chain crosses the membrane as a helical span at residues 1065–1087 (LVPLLSSIFIVLWIFALASAFLW). The Cytoplasmic portion of the chain corresponds to 1088–1213 (CIHRRRKQNT…QSLNRMEYIV (126 aa)). The segment at 1181 to 1202 (EERAPNKNPNWTNKQDNRDLET) is disordered.

The protein localises to the membrane. It localises to the cell membrane. Its function is as follows. Ligand for Notch receptors and involved in the mediation of Notch signaling. Seems to be involved in cell-fate decisions. This is Protein jagged-1b (jag1b) from Danio rerio (Zebrafish).